The sequence spans 335 residues: MVKYVLASAPAKVILFGEHSVVYGKPAIASAIELRTYVRAQFNDSGNIKIEAHDIKTPGLIVSFSEDKIYFETDYGKAAEVLSYVRYAIELALEESDKRVGIDVSITSQIPVGAGLGSSAAVAVATIGAVSRLLGLELSKEEIAKLGHKVELLVQGASSGIDPTVSAVGGFLYYKQGKFEPLPFMELPIVVGYTGSTGSTKELVAMVRKRYEEMPELVEPILEAMGKLVDKAKEIILSKLDEEEKLTKLGELMNINHGLLDALGVSTKKLGELVYAARTAGAIGAKLTGAGGGGCMYALAPGRQREVATAIKIAGGIPMITRVSREGLRIEEVSR.

111–121 (PVGAGLGSSAA) provides a ligand contact to ATP. Residue Asp162 is the Proton acceptor of the active site.

This sequence belongs to the GHMP kinase family. Mevalonate kinase subfamily. Homodimer. Requires Mg(2+) as cofactor.

Its subcellular location is the cytoplasm. The catalysed reaction is (R)-mevalonate + ATP = (R)-5-phosphomevalonate + ADP + H(+). The protein operates within isoprenoid biosynthesis; isopentenyl diphosphate biosynthesis via mevalonate pathway; isopentenyl diphosphate from (R)-mevalonate: step 1/3. Its function is as follows. Catalyzes the phosphorylation of (R)-mevalonate (MVA) to (R)-mevalonate 5-phosphate (MVAP). Functions in the mevalonate (MVA) pathway leading to isopentenyl diphosphate (IPP), a key precursor for the biosynthesis of isoprenoid compounds such as archaeal membrane lipids. In Pyrococcus horikoshii (strain ATCC 700860 / DSM 12428 / JCM 9974 / NBRC 100139 / OT-3), this protein is Mevalonate kinase.